We begin with the raw amino-acid sequence, 333 residues long: Foldase protein PrsA (333 aa).

The signal sequence occupies residues 1–21; it reads MKKRTIATGLVTLLSIVTLAA. Cys-22 is lipidated: N-palmitoyl cysteine. The S-diacylglycerol cysteine moiety is linked to residue Cys-22. Residues 144 to 237 form the PpiC domain; that stretch reads KPEVTAQVIQ…PVYYIVKITK (94 aa). The segment at 296–333 is disordered; the sequence is AASGSGSSGSTTTTTAASSAATTAADDQTTAAETTAAE.

The protein belongs to the PrsA family.

Its subcellular location is the cell membrane. It catalyses the reaction [protein]-peptidylproline (omega=180) = [protein]-peptidylproline (omega=0). Functionally, plays a major role in protein secretion by helping the post-translocational extracellular folding of several secreted proteins. The protein is Foldase protein PrsA of Streptococcus mutans serotype c (strain ATCC 700610 / UA159).